The sequence spans 493 residues: Cytochrome P450 2W1 (493 aa).

A signal peptide spans Met1–Gly23. Asn180 carries an N-linked (GlcNAc...) asparagine glycan. Heme is bound at residue Cys436.

This sequence belongs to the cytochrome P450 family. The cofactor is heme. As to expression, detected in colon, ileum, and testes.

It localises to the endoplasmic reticulum lumen. The protein localises to the cell membrane. Its subcellular location is the microsome membrane. It catalyses the reaction all-trans-retinoate + reduced [NADPH--hemoprotein reductase] + O2 = all-trans-4-hydroxyretinoate + oxidized [NADPH--hemoprotein reductase] + H2O + H(+). The enzyme catalyses 1-(9Z-octadecenoyl)-sn-glycero-3-phosphocholine + reduced [NADPH--hemoprotein reductase] + O2 = 1-[8-hydroxy-(9Z)-octadecenoyl]-sn-glycero-3-phosphocholine + oxidized [NADPH--hemoprotein reductase] + H2O + H(+). The catalysed reaction is 1-(9Z-octadecenoyl)-sn-glycero-3-phosphocholine + reduced [NADPH--hemoprotein reductase] + O2 = 1-[11-hydroxy-(9Z)-octadecenoyl]-sn-glycero-3-phosphocholine + oxidized [NADPH--hemoprotein reductase] + H2O + H(+). It carries out the reaction 1-(9Z-octadecenoyl)-sn-glycero-3-phosphocholine + reduced [NADPH--hemoprotein reductase] + O2 = 1-[(9S,10R)-epoxy-octadecanoyl]-sn-glycero-3-phosphocholine + oxidized [NADPH--hemoprotein reductase] + H2O + H(+). It catalyses the reaction 1-(9Z-octadecenoyl)-sn-glycero-3-phosphocholine + reduced [NADPH--hemoprotein reductase] + O2 = 1-[(9R,10S)-epoxy-octadecanoyl]-sn-glycero-3-phosphocholine + oxidized [NADPH--hemoprotein reductase] + H2O + H(+). A cytochrome P450 monooxygenase that may play a role in retinoid and phospholipid metabolism. Catalyzes the hydroxylation of saturated carbon hydrogen bonds. Hydroxylates all trans-retinoic acid (atRA) to 4-hydroxyretinoate and may regulate atRA clearance. Other retinoids such as all-trans retinol and all-trans retinal are potential endogenous substrates. Catalyzes both epoxidation of double bonds and hydroxylation of carbon hydrogen bonds of the fatty acyl chain of 1-acylphospholipids/2-lysophospholipids. Can metabolize various lysophospholipids classes including lysophosphatidylcholines (LPCs), lysophosphatidylinositols (LPIs), lysophosphatidylserines (LPSs), lysophosphatidylglycerols (LPGs), lysophosphatidylethanolamines (LPEs) and lysophosphatidic acids (LPAs). Has low or no activity toward 2-acylphospholipids/1-lysophospholipids, diacylphospholipids and free fatty acids. May play a role in tumorigenesis by activating procarcinogens such as aflatoxin B1, polycyclic aromatic hydrocarbon dihydrodiols and aromatic amines. Mechanistically, uses molecular oxygen inserting one oxygen atom into a substrate, and reducing the second into a water molecule, with two electrons provided by NADPH via cytochrome P450 reductase (CPR; NADPH-ferrihemoprotein reductase). The protein is Cytochrome P450 2W1 (Cyp2w1) of Mus musculus (Mouse).